We begin with the raw amino-acid sequence, 297 residues long: 4-hydroxy-tetrahydrodipicolinate synthase (297 aa).

Thr49 lines the pyruvate pocket. Tyr137 serves as the catalytic Proton donor/acceptor. The active-site Schiff-base intermediate with substrate is the Lys166. Ile208 lines the pyruvate pocket.

The protein belongs to the DapA family. In terms of assembly, homotetramer; dimer of dimers.

It localises to the cytoplasm. It carries out the reaction L-aspartate 4-semialdehyde + pyruvate = (2S,4S)-4-hydroxy-2,3,4,5-tetrahydrodipicolinate + H2O + H(+). It participates in amino-acid biosynthesis; L-lysine biosynthesis via DAP pathway; (S)-tetrahydrodipicolinate from L-aspartate: step 3/4. Its function is as follows. Catalyzes the condensation of (S)-aspartate-beta-semialdehyde [(S)-ASA] and pyruvate to 4-hydroxy-tetrahydrodipicolinate (HTPA). This chain is 4-hydroxy-tetrahydrodipicolinate synthase, found in Chlorobium phaeobacteroides (strain BS1).